Consider the following 659-residue polypeptide: RNA-binding protein MIP6 (659 aa).

Positions methionine 1–cysteine 27 are enriched in polar residues. Residues methionine 1 to glutamine 35 form a disordered region. RRM domains are found at residues asparagine 111–lysine 189, threonine 199–isoleucine 267, and lysine 313–aspartate 389.

Interacts with MEX67.

The protein resides in the cytoplasm. The sequence is that of RNA-binding protein MIP6 (MIP6) from Saccharomyces cerevisiae (strain ATCC 204508 / S288c) (Baker's yeast).